A 424-amino-acid chain; its full sequence is UPF0597 protein Sputcn32_1209 (424 aa).

The protein belongs to the UPF0597 family.

This is UPF0597 protein Sputcn32_1209 from Shewanella putrefaciens (strain CN-32 / ATCC BAA-453).